A 161-amino-acid chain; its full sequence is Endoribonuclease YbeY (161 aa).

Positions 121, 125, and 131 each coordinate Zn(2+).

Belongs to the endoribonuclease YbeY family. Zn(2+) serves as cofactor.

The protein resides in the cytoplasm. Single strand-specific metallo-endoribonuclease involved in late-stage 70S ribosome quality control and in maturation of the 3' terminus of the 16S rRNA. This Xanthomonas euvesicatoria pv. vesicatoria (strain 85-10) (Xanthomonas campestris pv. vesicatoria) protein is Endoribonuclease YbeY.